Consider the following 153-residue polypeptide: uncharacterized protein (153 aa).

The protein resides in the mitochondrion. This is an uncharacterized protein from Arabidopsis thaliana (Mouse-ear cress).